Here is a 391-residue protein sequence, read N- to C-terminus: Formate-dependent phosphoribosylglycinamide formyltransferase (391 aa).

N(1)-(5-phospho-beta-D-ribosyl)glycinamide contacts are provided by residues 20-21 (EL) and E80. Residues R112, K153, 158-163 (SSGKGQ), 193-196 (EGFV), and E201 contribute to the ATP site. Residues 117–306 (RLAAEELGLP…EFALHVRAFT (190 aa)) enclose the ATP-grasp domain. The Mg(2+) site is built by E265 and E277. Residues D284, K354, and 361–362 (RR) contribute to the N(1)-(5-phospho-beta-D-ribosyl)glycinamide site.

The protein belongs to the PurK/PurT family. In terms of assembly, homodimer.

The enzyme catalyses N(1)-(5-phospho-beta-D-ribosyl)glycinamide + formate + ATP = N(2)-formyl-N(1)-(5-phospho-beta-D-ribosyl)glycinamide + ADP + phosphate + H(+). It functions in the pathway purine metabolism; IMP biosynthesis via de novo pathway; N(2)-formyl-N(1)-(5-phospho-D-ribosyl)glycinamide from N(1)-(5-phospho-D-ribosyl)glycinamide (formate route): step 1/1. Involved in the de novo purine biosynthesis. Catalyzes the transfer of formate to 5-phospho-ribosyl-glycinamide (GAR), producing 5-phospho-ribosyl-N-formylglycinamide (FGAR). Formate is provided by PurU via hydrolysis of 10-formyl-tetrahydrofolate. The polypeptide is Formate-dependent phosphoribosylglycinamide formyltransferase (Vibrio cholerae serotype O1 (strain ATCC 39315 / El Tor Inaba N16961)).